The sequence spans 71 residues: DNA-directed RNA polymerase subunit epsilon (71 aa).

It belongs to the RNA polymerase subunit epsilon family. As to quaternary structure, RNAP is composed of a core of 2 alpha, a beta and a beta' subunit. The core is associated with a delta subunit, and at least one of epsilon or omega. When a sigma factor is associated with the core the holoenzyme is formed, which can initiate transcription.

It carries out the reaction RNA(n) + a ribonucleoside 5'-triphosphate = RNA(n+1) + diphosphate. Functionally, a non-essential component of RNA polymerase (RNAP). The polypeptide is DNA-directed RNA polymerase subunit epsilon (Staphylococcus saprophyticus subsp. saprophyticus (strain ATCC 15305 / DSM 20229 / NCIMB 8711 / NCTC 7292 / S-41)).